The sequence spans 209 residues: uncharacterized protein (209 aa).

Positions 1–17 (MKKLVTGLLALSLFLAA) are cleaved as a signal peptide. The interval 17–106 (ACGQDSDQQK…SGQTTNNQKS (90 aa)) is disordered. Cys18 carries the N-palmitoyl cysteine lipid modification. Cys18 carries S-diacylglycerol cysteine lipidation. Basic and acidic residues predominate over residues 23-70 (DQQKDSNKEKDDKAKTEQQDKKTNDSSKDKKDNKDDSKDVNKDNKDNS). Low complexity predominate over residues 71–106 (ANDNQQQSNSNATNNDQNQTNNNQSNSGQTTNNQKS).

The protein resides in the cell membrane. This is an uncharacterized protein from Staphylococcus aureus (strain MRSA252).